Reading from the N-terminus, the 244-residue chain is Protein IN2-1 homolog B (244 aa).

The tract at residues 1-27 (MAAAAAAPASSEKEVLPPSLTSSSEPP) is disordered. The region spanning 32–113 (GTTRLYVAYH…YIDTNFEGPA (82 aa)) is the GST N-terminal domain. Glutathione contacts are provided by residues Val85 and 97–98 (ES). The region spanning 118-241 (DSEKQQFAEE…FLLEHTKKRL (124 aa)) is the GST C-terminal domain.

This Oryza sativa subsp. indica (Rice) protein is Protein IN2-1 homolog B (GSTZ5).